A 281-amino-acid chain; its full sequence is Proline iminopeptidase PfmaB (281 aa).

Residues 23–267 enclose the AB hydrolase-1 domain; the sequence is PLVITLHGGR…NANHSVHVEK (245 aa).

This sequence belongs to the peptidase S33 family.

It carries out the reaction Release of N-terminal proline from a peptide.. Proline iminopeptidase; part of the gene cluster that mediates the biosynthesis of dihydroxynaphthalene (DHN)-melanin, a bluish-green pigment forming a dark layer in the conidial wall that protects the conidia from UV radiations. The first step of the pathway is the production of the pentaketide 1,3,6,8-tetrahydroxynaphthalene (1,3,6,8-THN or T4HN) by the polyketide synthase PfmaE though condensation of acetyl-CoA with malonyl-CoA. T4HN is not stable and easily oxidizes into the stable form flaviolin. T4HN is also substrate of the hydroxynaphthalene reductase PfmaG to yield scytalone. The scytalone dehydratase PfmaJ then reduces scytalone to 1,3,8-THN. 1,3,8-THN is then substrate of the hydroxynaphthalene reductase PfmaI to yield vermelone. Vermelone is further converted by the multicopper oxidase PfmaD to 1,8-DHN. Finally the laccase PFICI_06862 transforms 1,8-DHN to DHN-melanin. The roles of the 5-oxoprolinase PfmaA and the proline iminopeptidase PfmaB within the cluster have not been elucidated yet. In Pestalotiopsis fici (strain W106-1 / CGMCC3.15140), this protein is Proline iminopeptidase PfmaB.